Reading from the N-terminus, the 216-residue chain is Octanoyltransferase (216 aa).

The BPL/LPL catalytic domain occupies 33–216 (AQTADELWIV…AEKLTRHLSG (184 aa)). Residues 72–79 (RGGEVTYH), 148–150 (ALG), and 162–164 (GVS) contribute to the substrate site. Cys-180 acts as the Acyl-thioester intermediate in catalysis.

Belongs to the LipB family.

It localises to the cytoplasm. The enzyme catalyses octanoyl-[ACP] + L-lysyl-[protein] = N(6)-octanoyl-L-lysyl-[protein] + holo-[ACP] + H(+). The protein operates within protein modification; protein lipoylation via endogenous pathway; protein N(6)-(lipoyl)lysine from octanoyl-[acyl-carrier-protein]: step 1/2. Catalyzes the transfer of endogenously produced octanoic acid from octanoyl-acyl-carrier-protein onto the lipoyl domains of lipoate-dependent enzymes. Lipoyl-ACP can also act as a substrate although octanoyl-ACP is likely to be the physiological substrate. The sequence is that of Octanoyltransferase from Herminiimonas arsenicoxydans.